We begin with the raw amino-acid sequence, 199 residues long: Mediator of RNA polymerase II transcription subunit 10 (199 aa).

This sequence belongs to the Mediator complex subunit 10 family. As to quaternary structure, component of the Mediator complex.

It localises to the nucleus. Its function is as follows. Component of the Mediator complex, a coactivator involved in the regulated transcription of nearly all RNA polymerase II-dependent genes. Mediator functions as a bridge to convey information from gene-specific regulatory proteins to the basal RNA polymerase II transcription machinery. Mediator is recruited to promoters by direct interactions with regulatory proteins and serves as a scaffold for the assembly of a functional preinitiation complex with RNA polymerase II and the general transcription factors. The sequence is that of Mediator of RNA polymerase II transcription subunit 10 (NUT2) from Candida glabrata (strain ATCC 2001 / BCRC 20586 / JCM 3761 / NBRC 0622 / NRRL Y-65 / CBS 138) (Yeast).